The sequence spans 185 residues: Ribosome-recycling factor (185 aa).

Position 162 is an N6-acetyllysine (Lys162).

It belongs to the RRF family.

It is found in the cytoplasm. In terms of biological role, responsible for the release of ribosomes from messenger RNA at the termination of protein biosynthesis. May increase the efficiency of translation by recycling ribosomes from one round of translation to another. This chain is Ribosome-recycling factor, found in Shigella boydii serotype 18 (strain CDC 3083-94 / BS512).